Consider the following 454-residue polypeptide: Bifunctional protein GlmU (454 aa).

The tract at residues 1-226 (MSLDIVILAA…AMEVQGANDR (226 aa)) is pyrophosphorylase. UDP-N-acetyl-alpha-D-glucosamine contacts are provided by residues 8–11 (LAAG), K22, Q73, 78–79 (GT), 99–101 (YGD), G136, E151, N166, and N224. Position 101 (D101) interacts with Mg(2+). Residue N224 coordinates Mg(2+). The linker stretch occupies residues 227–247 (LQLAQLERHYQSRVARRLMAQ). An N-acetyltransferase region spans residues 248–454 (GVTLRDPARF…GWQRPTKQKK (207 aa)). 2 residues coordinate UDP-N-acetyl-alpha-D-glucosamine: R330 and K348. H360 (proton acceptor) is an active-site residue. UDP-N-acetyl-alpha-D-glucosamine-binding residues include Y363 and N374. Residues A377, 383 to 384 (NY), S402, A420, and R437 each bind acetyl-CoA.

This sequence in the N-terminal section; belongs to the N-acetylglucosamine-1-phosphate uridyltransferase family. The protein in the C-terminal section; belongs to the transferase hexapeptide repeat family. As to quaternary structure, homotrimer. Mg(2+) is required as a cofactor.

It is found in the cytoplasm. The catalysed reaction is alpha-D-glucosamine 1-phosphate + acetyl-CoA = N-acetyl-alpha-D-glucosamine 1-phosphate + CoA + H(+). It carries out the reaction N-acetyl-alpha-D-glucosamine 1-phosphate + UTP + H(+) = UDP-N-acetyl-alpha-D-glucosamine + diphosphate. It functions in the pathway nucleotide-sugar biosynthesis; UDP-N-acetyl-alpha-D-glucosamine biosynthesis; N-acetyl-alpha-D-glucosamine 1-phosphate from alpha-D-glucosamine 6-phosphate (route II): step 2/2. Its pathway is nucleotide-sugar biosynthesis; UDP-N-acetyl-alpha-D-glucosamine biosynthesis; UDP-N-acetyl-alpha-D-glucosamine from N-acetyl-alpha-D-glucosamine 1-phosphate: step 1/1. The protein operates within bacterial outer membrane biogenesis; LPS lipid A biosynthesis. Functionally, catalyzes the last two sequential reactions in the de novo biosynthetic pathway for UDP-N-acetylglucosamine (UDP-GlcNAc). The C-terminal domain catalyzes the transfer of acetyl group from acetyl coenzyme A to glucosamine-1-phosphate (GlcN-1-P) to produce N-acetylglucosamine-1-phosphate (GlcNAc-1-P), which is converted into UDP-GlcNAc by the transfer of uridine 5-monophosphate (from uridine 5-triphosphate), a reaction catalyzed by the N-terminal domain. The sequence is that of Bifunctional protein GlmU from Azotobacter vinelandii (strain DJ / ATCC BAA-1303).